Consider the following 75-residue polypeptide: Putative DNA-directed RNA polymerase subunit omega (75 aa).

This sequence belongs to the RNA polymerase subunit omega family.

The protein localises to the plastid. The protein resides in the chloroplast. The enzyme catalyses RNA(n) + a ribonucleoside 5'-triphosphate = RNA(n+1) + diphosphate. In terms of biological role, may be involved in RNA polymerase activity. This is Putative DNA-directed RNA polymerase subunit omega (rpoZ) from Mesostigma viride (Green alga).